The primary structure comprises 381 residues: Chaperone protein DnaJ (381 aa).

Residues 4-69 (DYYEILGVAR…EKRARYDQFG (66 aa)) enclose the J domain. The CR-type zinc finger occupies 139–221 (GGEKELRVTR…CGGSGLVRKT (83 aa)). C152, C155, C169, C172, C195, C198, C209, and C212 together coordinate Zn(2+). CXXCXGXG motif repeat units lie at residues 152–159 (CGHCHGNG), 169–176 (CPTCQGRG), 195–202 (CSTCRGEG), and 209–216 (CRECGGSG).

Belongs to the DnaJ family. As to quaternary structure, homodimer. Requires Zn(2+) as cofactor.

It is found in the cytoplasm. In terms of biological role, participates actively in the response to hyperosmotic and heat shock by preventing the aggregation of stress-denatured proteins and by disaggregating proteins, also in an autonomous, DnaK-independent fashion. Unfolded proteins bind initially to DnaJ; upon interaction with the DnaJ-bound protein, DnaK hydrolyzes its bound ATP, resulting in the formation of a stable complex. GrpE releases ADP from DnaK; ATP binding to DnaK triggers the release of the substrate protein, thus completing the reaction cycle. Several rounds of ATP-dependent interactions between DnaJ, DnaK and GrpE are required for fully efficient folding. Also involved, together with DnaK and GrpE, in the DNA replication of plasmids through activation of initiation proteins. In Carboxydothermus hydrogenoformans (strain ATCC BAA-161 / DSM 6008 / Z-2901), this protein is Chaperone protein DnaJ.